Reading from the N-terminus, the 347-residue chain is Indole-3-glycerol phosphate lyase, chloroplastic (347 aa).

Disordered regions lie at residues methionine 1–arginine 38 and alanine 64–proline 89. The transit peptide at methionine 1–arginine 53 directs the protein to the chloroplast. Residues serine 8–leucine 27 show a composition bias toward low complexity. Residues alanine 64–proline 76 are compositionally biased toward pro residues.

This sequence belongs to the TrpA family. In terms of assembly, tetramer of two alpha and two beta chains for the tryptophan synthase activity. Homodimer of alpha chains for the indole-3-glycerol phosphate lyase activity.

Its subcellular location is the plastid. It is found in the chloroplast. The catalysed reaction is (1S,2R)-1-C-(indol-3-yl)glycerol 3-phosphate = indole + D-glyceraldehyde 3-phosphate. It catalyses the reaction (1S,2R)-1-C-(indol-3-yl)glycerol 3-phosphate + L-serine = D-glyceraldehyde 3-phosphate + L-tryptophan + H2O. It participates in secondary metabolite biosynthesis; 2,4-dihydroxy-1,4-benzoxazin-3-one biosynthesis; 2,4-dihydroxy-1,4-benzoxazin-3-one from indoleglycerol phosphate: step 1/5. The protein operates within amino-acid biosynthesis; L-tryptophan biosynthesis; L-tryptophan from chorismate: step 5/5. The alpha subunit is responsible for the aldol cleavage of indoleglycerol phosphate to indole and glyceraldehyde 3-phosphate. In bacteria, tryptophan synthase alpha (TSA) activity is almost completely dependent on formation of an active alpha2beta2 complex with tryptophan synthase beta (TSB), and indole is usually not released during tryptophan synthesis. In maize, the TSA homolog BX1 catalyzes the formation of free indole from indole-3-glycerol phosphate, independently of TSB. This is Indole-3-glycerol phosphate lyase, chloroplastic (BX1) from Zea mays (Maize).